Reading from the N-terminus, the 358-residue chain is uncharacterized protein (358 aa).

The region spanning 229–264 is the EF-hand domain; the sequence is KQLHEFKLAFDYFDQEKNGWLDYEHFELCLKSQGYN. Positions 242, 246, 248, and 253 each coordinate Ca(2+).

This is an uncharacterized protein from Caenorhabditis elegans.